Reading from the N-terminus, the 329-residue chain is Peroxidase 30 (329 aa).

The signal sequence occupies residues 1–27 (MKTMTQLNIAVVVVVTVLIGMLRSSEA). 4 cysteine pairs are disulfide-bonded: C38–C116, C71–C76, C122–C324, and C201–C234. H69 acts as the Proton acceptor in catalysis. Ca(2+) contacts are provided by D70, V73, G75, D77, and S79. 2 N-linked (GlcNAc...) asparagine glycosylation sites follow: N83 and N155. Residues 141 to 165 (SWSVPTGRRDGRISNKTEATNNIPP) form a disordered region. Polar residues predominate over residues 156–165 (KTEATNNIPP). Residue P164 coordinates substrate. Residue N169 is glycosylated (N-linked (GlcNAc...) asparagine). Residue H194 coordinates heme b. T195 provides a ligand contact to Ca(2+). N-linked (GlcNAc...) asparagine glycosylation is found at N210 and N240. Positions 247, 250, and 255 each coordinate Ca(2+). N-linked (GlcNAc...) asparagine glycosylation occurs at N290.

Belongs to the peroxidase family. Classical plant (class III) peroxidase subfamily. The cofactor is heme b. Ca(2+) is required as a cofactor. Mainly expressed in roots.

The protein resides in the secreted. The catalysed reaction is 2 a phenolic donor + H2O2 = 2 a phenolic radical donor + 2 H2O. Removal of H(2)O(2), oxidation of toxic reductants, biosynthesis and degradation of lignin, suberization, auxin catabolism, response to environmental stresses such as wounding, pathogen attack and oxidative stress. These functions might be dependent on each isozyme/isoform in each plant tissue. This is Peroxidase 30 (PER30) from Arabidopsis thaliana (Mouse-ear cress).